Reading from the N-terminus, the 35-residue chain is Mu-theraphotoxin-Pn3b (35 aa).

Cystine bridges form between Cys2–Cys16, Cys9–Cys21, and Cys15–Cys28.

The protein belongs to the neurotoxin 10 (Hwtx-1) family. 28 (Jztx-11) subfamily. In terms of tissue distribution, expressed by the venom gland.

The protein resides in the secreted. Functionally, gating-modifier toxin that targets voltage-gated sodium channels with a preferential activity on Nav1.7/SCN9A. On Nav1.7/SCN9A, the toxin acts by shifting the voltage-dependence of activation to more depolarized potentials, whereas it does not cause significant effect on the voltage-dependence of activation on other sodium channels. Minor effects are observed on the voltage-dependence of steady-state fast inactivation for all sodium channels tested (Nav1.1/SCN1A-Nav1.8/SCN10A). By testing the toxin on channel chimera, it has been shown to interact with the S3-S4 linkers in DII and DIV domains of Nav1.7/SCN9A. In vivo, the toxin dose-dependently reduces OD1-induced spontaneous pain behaviors. The polypeptide is Mu-theraphotoxin-Pn3b (Pamphobeteus nigricolor (Giant blue bloom tarantula)).